An 87-amino-acid polypeptide reads, in one-letter code: MARVTVEDCLEHVDNRFELVMLSTKRARQLATGGKEPKLAWENDKPTVMALREIAAGVMDYSVIAEAEIVEDEPLFAAFEDESNEAV.

It belongs to the RNA polymerase subunit omega family. In terms of assembly, the RNAP catalytic core consists of 2 alpha, 1 beta, 1 beta' and 1 omega subunit. When a sigma factor is associated with the core the holoenzyme is formed, which can initiate transcription.

The enzyme catalyses RNA(n) + a ribonucleoside 5'-triphosphate = RNA(n+1) + diphosphate. Promotes RNA polymerase assembly. Latches the N- and C-terminal regions of the beta' subunit thereby facilitating its interaction with the beta and alpha subunits. In Pseudomonas syringae pv. syringae (strain B728a), this protein is DNA-directed RNA polymerase subunit omega.